The chain runs to 400 residues: Aspartate aminotransferase (400 aa).

Positions 37, 126, and 176 each coordinate L-aspartate. At Lys238 the chain carries N6-(pyridoxal phosphate)lysine. Arg367 provides a ligand contact to L-aspartate.

The protein belongs to the class-I pyridoxal-phosphate-dependent aminotransferase family. As to quaternary structure, homodimer. Pyridoxal 5'-phosphate is required as a cofactor.

Its subcellular location is the cytoplasm. The enzyme catalyses L-aspartate + 2-oxoglutarate = oxaloacetate + L-glutamate. In terms of biological role, catalyzes the reversible conversion of aspartate and 2-oxoglutarate to glutamate and oxaloacetate. Has very weak prephenate aminotransferase activity. In Musicola paradisiaca (strain Ech703) (Dickeya paradisiaca), this protein is Aspartate aminotransferase.